The sequence spans 390 residues: Mevalonate kinase (390 aa).

ATP contacts are provided by residues Lys-16, Ser-130, and 135–141; that span reads GAGLGSS. 2 residues coordinate Mg(2+): Ser-141 and Glu-193. The active-site Proton acceptor is Asp-204.

This sequence belongs to the GHMP kinase family. Mevalonate kinase subfamily. The cofactor is Mg(2+).

Its subcellular location is the cytoplasm. The enzyme catalyses (R)-mevalonate + ATP = (R)-5-phosphomevalonate + ADP + H(+). It participates in isoprenoid biosynthesis; isopentenyl diphosphate biosynthesis via mevalonate pathway; isopentenyl diphosphate from (R)-mevalonate: step 1/3. Functionally, catalyzes the phosphorylation of mevalonate to mevalonate 5-phosphate, a key step in isoprenoid biosynthesis. This chain is Mevalonate kinase, found in Dictyostelium discoideum (Social amoeba).